The chain runs to 157 residues: Endoribonuclease YbeY (157 aa).

Zn(2+)-binding residues include His114, His118, and His124.

This sequence belongs to the endoribonuclease YbeY family. It depends on Zn(2+) as a cofactor.

It is found in the cytoplasm. Functionally, single strand-specific metallo-endoribonuclease involved in late-stage 70S ribosome quality control and in maturation of the 3' terminus of the 16S rRNA. The protein is Endoribonuclease YbeY of Caulobacter vibrioides (strain ATCC 19089 / CIP 103742 / CB 15) (Caulobacter crescentus).